A 1871-amino-acid chain; its full sequence is Protein RRP5 homolog (1871 aa).

Residues 1–62 form a disordered region; that stretch reads MANLEESFPR…KTKKLKIEKR (62 aa). A2 is modified (N-acetylalanine). The residue at position 7 (S7) is a Phosphoserine. Positions 43–59 are enriched in basic residues; that stretch reads KRKKSQKGPAKTKKLKI. 4 consecutive S1 motif domains span residues 83–171, 187–258, 281–346, and 365–436; these read GMRI…LSLN, GMLL…LSVG, GLVV…LSLR, and GAVL…LSLR. S438 bears the Phosphoserine mark. S1 motif domains follow at residues 453 to 522, 542 to 611, 636 to 707, and 729 to 798; these read GAVV…MTLK, GLQT…LSFK, GQLV…LCRK, and GMLL…LSLR. The interval 998 to 1018 is disordered; it reads AAKRTMRPTQKDSETVDEDEE. K1030 is covalently cross-linked (Glycyl lysine isopeptide (Lys-Gly) (interchain with G-Cter in SUMO1)). S1 motif domains follow at residues 1036–1109, 1149–1222, 1230–1298, and 1324–1396; these read GDMV…ISHP, GQTV…LSLT, GEVA…LSLR, and GQLL…LSFL. Phosphoserine is present on residues S1360 and S1362. Disordered regions lie at residues 1395–1531 and 1549–1586; these read FLPG…APRL and ALPPLAESSDSEEDEKPHQATIKKSKKERELEKQKAEK. A Glycyl lysine isopeptide (Lys-Gly) (interchain with G-Cter in SUMO2) cross-link involves residue K1416. Composition is skewed to basic and acidic residues over residues 1416–1459 and 1469–1484; these read KQEE…EKQQ and GGRECRESGSEQERVS. Phosphoserine occurs at positions 1476, 1493, and 1498. Positions 1575 to 1586 are enriched in basic and acidic residues; sequence KERELEKQKAEK. 4 HAT repeats span residues 1599–1631, 1705–1737, 1775–1807, and 1809–1844; these read GRQPESADDFDRLVLSSPNSSILWLQYMAFHLQ, EKFQEAGELYNRMLKRFRQEKAVWIKYGAFLLR, GDAERAKAIFENTLSTYPKRTDVWSVYIDMTIK, and GSQKDVRDIFERVIHLSLAPKRMKFFFKRYLDYEKQ.

As to quaternary structure, interacts with NF-kappa-B p50/NFKB1 and NF-kappa-B p65/RELA.

It localises to the nucleus. The protein localises to the nucleolus. Functionally, essential for the generation of mature 18S rRNA, specifically necessary for cleavages at sites A0, 1 and 2 of the 47S precursor. Directly interacts with U3 snoRNA. Its function is as follows. Involved in the biogenesis of rRNA. In Homo sapiens (Human), this protein is Protein RRP5 homolog (PDCD11).